The primary structure comprises 885 residues: Eukaryotic translation initiation factor 3 subunit C (885 aa).

Residues 1–81 form a disordered region; sequence MSFFAKLQGS…SDSDDERQAV (81 aa). Low complexity predominate over residues 9–28; it reads GSDSESSSGSESEESILSGS. The span at 55–76 shows a compositional bias: acidic residues; sequence EESESEEESSDEDEEEMSDSDD. The 174-residue stretch at 624-797 folds into the PCI domain; it reads FHMHLNVELL…GVVIFHRVEQ (174 aa). The disordered stretch occupies residues 822–885; it reads LDVKLGNQGQ…TTMGRRVTAQ (64 aa). Positions 855–872 are enriched in gly residues; that stretch reads RGTYRGRGGRGGRGGFNQ.

The protein belongs to the eIF-3 subunit C family. Component of the eukaryotic translation initiation factor 3 (eIF-3) complex.

The protein resides in the cytoplasm. Its function is as follows. Component of the eukaryotic translation initiation factor 3 (eIF-3) complex, which is involved in protein synthesis of a specialized repertoire of mRNAs and, together with other initiation factors, stimulates binding of mRNA and methionyl-tRNAi to the 40S ribosome. The eIF-3 complex specifically targets and initiates translation of a subset of mRNAs involved in cell proliferation. The sequence is that of Eukaryotic translation initiation factor 3 subunit C from Cryptococcus neoformans var. neoformans serotype D (strain B-3501A) (Filobasidiella neoformans).